The primary structure comprises 107 residues: UPF0145 protein YbjQ (107 aa).

The protein belongs to the UPF0145 family.

The protein is UPF0145 protein YbjQ of Salmonella dublin (strain CT_02021853).